A 147-amino-acid polypeptide reads, in one-letter code: Hemoglobin subunit epsilon (147 aa).

Residues 3-147 (HFTAEEKSTI…VATALAHKYH (145 aa)) form the Globin domain. Phosphoserine is present on residues serine 14 and serine 51. Histidine 64 and histidine 93 together coordinate heme b.

The protein belongs to the globin family. Heterotetramer of two alpha chains and two epsilon chains in early embryonic hemoglobin Gower-2; two zeta chains and two epsilon chains in early embryonic hemoglobin Gower-1. Red blood cells.

In terms of biological role, the epsilon chain is a beta-type chain of early mammalian embryonic hemoglobin. The sequence is that of Hemoglobin subunit epsilon (HBE1) from Cheirogaleus medius (Fat-tailed dwarf lemur).